Reading from the N-terminus, the 407-residue chain is Serine hydroxymethyltransferase (407 aa).

(6S)-5,6,7,8-tetrahydrofolate contacts are provided by residues Leu-117 and 121–123 (GHL). At Lys-226 the chain carries N6-(pyridoxal phosphate)lysine. Glu-242 lines the (6S)-5,6,7,8-tetrahydrofolate pocket.

It belongs to the SHMT family. As to quaternary structure, homodimer. The cofactor is pyridoxal 5'-phosphate.

The protein localises to the cytoplasm. It carries out the reaction (6R)-5,10-methylene-5,6,7,8-tetrahydrofolate + glycine + H2O = (6S)-5,6,7,8-tetrahydrofolate + L-serine. It functions in the pathway one-carbon metabolism; tetrahydrofolate interconversion. It participates in amino-acid biosynthesis; glycine biosynthesis; glycine from L-serine: step 1/1. Its function is as follows. Catalyzes the reversible interconversion of serine and glycine with tetrahydrofolate (THF) serving as the one-carbon carrier. This reaction serves as the major source of one-carbon groups required for the biosynthesis of purines, thymidylate, methionine, and other important biomolecules. Also exhibits THF-independent aldolase activity toward beta-hydroxyamino acids, producing glycine and aldehydes, via a retro-aldol mechanism. In Thermus thermophilus (strain ATCC BAA-163 / DSM 7039 / HB27), this protein is Serine hydroxymethyltransferase.